A 262-amino-acid chain; its full sequence is Ubiquinone biosynthesis protein COQ4, mitochondrial (262 aa).

H154, D155, H158, and E170 together coordinate Zn(2+). A disordered region spans residues 243-262; sequence LGIEQPPDLRQMKKDMAKKK. Over residues 252-262 the composition is skewed to basic and acidic residues; that stretch reads RQMKKDMAKKK.

The protein belongs to the COQ4 family. As to quaternary structure, component of a multi-subunit COQ enzyme complex, composed of at least COQ3, COQ4, COQ5, COQ6, COQ7 and COQ9. It depends on Zn(2+) as a cofactor.

The protein localises to the mitochondrion inner membrane. The enzyme catalyses a 4-hydroxy-3-methoxy-5-(all-trans-polyprenyl)benzoate + H(+) = a 2-methoxy-6-(all-trans-polyprenyl)phenol + CO2. Its pathway is cofactor biosynthesis; ubiquinone biosynthesis. In terms of biological role, lyase that catalyzes the C1-decarboxylation of 4-hydroxy-3-methoxy-5-(all-trans-polyprenyl)benzoic acid into 2-methoxy-6-(all-trans-polyprenyl)phenol during ubiquinone biosynthesis. The sequence is that of Ubiquinone biosynthesis protein COQ4, mitochondrial from Yarrowia lipolytica (strain CLIB 122 / E 150) (Yeast).